A 60-amino-acid polypeptide reads, in one-letter code: UPF0434 protein PC1_1771 (60 aa).

This sequence belongs to the UPF0434 family.

The polypeptide is UPF0434 protein PC1_1771 (Pectobacterium carotovorum subsp. carotovorum (strain PC1)).